Reading from the N-terminus, the 281-residue chain is Ribosomal RNA small subunit methyltransferase A (281 aa).

S-adenosyl-L-methionine contacts are provided by Asn-36, Leu-38, Gly-63, Glu-84, Asp-109, and Asn-127.

This sequence belongs to the class I-like SAM-binding methyltransferase superfamily. rRNA adenine N(6)-methyltransferase family. RsmA subfamily.

It is found in the cytoplasm. It catalyses the reaction adenosine(1518)/adenosine(1519) in 16S rRNA + 4 S-adenosyl-L-methionine = N(6)-dimethyladenosine(1518)/N(6)-dimethyladenosine(1519) in 16S rRNA + 4 S-adenosyl-L-homocysteine + 4 H(+). In terms of biological role, specifically dimethylates two adjacent adenosines (A1518 and A1519) in the loop of a conserved hairpin near the 3'-end of 16S rRNA in the 30S particle. May play a critical role in biogenesis of 30S subunits. This chain is Ribosomal RNA small subunit methyltransferase A, found in Borrelia garinii subsp. bavariensis (strain ATCC BAA-2496 / DSM 23469 / PBi) (Borreliella bavariensis).